The following is a 351-amino-acid chain: Signal recognition particle receptor FtsY (351 aa).

GTP is bound by residues 152–159, 235–239, and 299–302; these read GVNGSGKT, DTAGR, and TKMD.

Belongs to the GTP-binding SRP family. FtsY subfamily. Part of the signal recognition particle protein translocation system, which is composed of SRP and FtsY.

It localises to the cell membrane. The protein localises to the cytoplasm. It catalyses the reaction GTP + H2O = GDP + phosphate + H(+). Its function is as follows. Involved in targeting and insertion of nascent membrane proteins into the cytoplasmic membrane. Acts as a receptor for the complex formed by the signal recognition particle (SRP) and the ribosome-nascent chain (RNC). This Metamycoplasma hominis (strain ATCC 23114 / DSM 25592 / NBRC 14850 / NCTC 10111 / PG21) (Mycoplasma hominis) protein is Signal recognition particle receptor FtsY.